The chain runs to 226 residues: MTSRDSASSEITPAVLLRAYACGIFPMAESADDPTLFWVEPELRGVIPLGGFRVASRLARTVRSDGFRVTVNTAFKATIAGCAAPQAGREDTWINKRIRDLYSGLFELGHCHSVEAWQGDDLVGGLYGVSLGRAFFGESMFHTARDASKVALVHLVARLIHGGFELLDTQYVTEHLKNFGAVEIPRRRYTALLDKALAGEPGDFLKLSPGEAIPGARALEIIASRQ.

It belongs to the L/F-transferase family.

It localises to the cytoplasm. It carries out the reaction N-terminal L-lysyl-[protein] + L-leucyl-tRNA(Leu) = N-terminal L-leucyl-L-lysyl-[protein] + tRNA(Leu) + H(+). The catalysed reaction is N-terminal L-arginyl-[protein] + L-leucyl-tRNA(Leu) = N-terminal L-leucyl-L-arginyl-[protein] + tRNA(Leu) + H(+). The enzyme catalyses L-phenylalanyl-tRNA(Phe) + an N-terminal L-alpha-aminoacyl-[protein] = an N-terminal L-phenylalanyl-L-alpha-aminoacyl-[protein] + tRNA(Phe). Functions in the N-end rule pathway of protein degradation where it conjugates Leu, Phe and, less efficiently, Met from aminoacyl-tRNAs to the N-termini of proteins containing an N-terminal arginine or lysine. The sequence is that of Leucyl/phenylalanyl-tRNA--protein transferase from Bradyrhizobium diazoefficiens (strain JCM 10833 / BCRC 13528 / IAM 13628 / NBRC 14792 / USDA 110).